We begin with the raw amino-acid sequence, 28 residues long: Potassium channel toxin alpha-KTx 9.3 (28 aa).

3 cysteine pairs are disulfide-bonded: cysteine 3–cysteine 19, cysteine 6–cysteine 24, and cysteine 10–cysteine 26.

The protein belongs to the short scorpion toxin superfamily. Potassium channel inhibitor family. Alpha-KTx 09 subfamily. Expressed by the venom gland.

The protein localises to the secreted. Functionally, inhibits voltage-gated potassium channels. This Aegaeobuthus nigrocinctus (Scorpion) protein is Potassium channel toxin alpha-KTx 9.3.